The following is a 243-amino-acid chain: 1-(5-phosphoribosyl)-5-[(5-phosphoribosylamino)methylideneamino] imidazole-4-carboxamide isomerase (243 aa).

D8 acts as the Proton acceptor in catalysis. D129 (proton donor) is an active-site residue.

This sequence belongs to the HisA/HisF family.

It localises to the cytoplasm. It carries out the reaction 1-(5-phospho-beta-D-ribosyl)-5-[(5-phospho-beta-D-ribosylamino)methylideneamino]imidazole-4-carboxamide = 5-[(5-phospho-1-deoxy-D-ribulos-1-ylimino)methylamino]-1-(5-phospho-beta-D-ribosyl)imidazole-4-carboxamide. Its pathway is amino-acid biosynthesis; L-histidine biosynthesis; L-histidine from 5-phospho-alpha-D-ribose 1-diphosphate: step 4/9. This Brucella anthropi (strain ATCC 49188 / DSM 6882 / CCUG 24695 / JCM 21032 / LMG 3331 / NBRC 15819 / NCTC 12168 / Alc 37) (Ochrobactrum anthropi) protein is 1-(5-phosphoribosyl)-5-[(5-phosphoribosylamino)methylideneamino] imidazole-4-carboxamide isomerase.